Reading from the N-terminus, the 319-residue chain is Ribonuclease Z (319 aa).

Zn(2+) is bound by residues histidine 62, histidine 64, aspartate 66, histidine 67, histidine 139, aspartate 209, and histidine 268. Catalysis depends on aspartate 66, which acts as the Proton acceptor.

It belongs to the RNase Z family. Homodimer. The cofactor is Zn(2+).

It carries out the reaction Endonucleolytic cleavage of RNA, removing extra 3' nucleotides from tRNA precursor, generating 3' termini of tRNAs. A 3'-hydroxy group is left at the tRNA terminus and a 5'-phosphoryl group is left at the trailer molecule.. Its function is as follows. Zinc phosphodiesterase, which displays some tRNA 3'-processing endonuclease activity. Probably involved in tRNA maturation, by removing a 3'-trailer from precursor tRNA. This is Ribonuclease Z from Pseudomonas putida (strain ATCC 700007 / DSM 6899 / JCM 31910 / BCRC 17059 / LMG 24140 / F1).